A 205-amino-acid polypeptide reads, in one-letter code: UPF0301 protein AZC_0488 (205 aa).

The protein belongs to the UPF0301 (AlgH) family.

The protein is UPF0301 protein AZC_0488 of Azorhizobium caulinodans (strain ATCC 43989 / DSM 5975 / JCM 20966 / LMG 6465 / NBRC 14845 / NCIMB 13405 / ORS 571).